A 130-amino-acid polypeptide reads, in one-letter code: uncharacterized protein (130 aa).

A signal peptide spans 1–23; that stretch reads MINRKVVYALSALLLFVYSYAFI.

This is an uncharacterized protein from Aquifex aeolicus (strain VF5).